The following is a 197-amino-acid chain: CRISPR system CMR subunit Cmr7 1 (197 aa).

It belongs to the CRISPR system Cmr7 family. Possible homodimer. Part of the CMR ribonucleoprotein complex, consisting of crRNA plus Cmr1/Cmr2/Cmr3/Cmr4/Cmr5/Cmr6 at 1:1 and possibly 3 Cmr7 dimers. A Cmr2/Cmr3/Cmr7 subcomplex without crRNA can also be isolated. It does not cleave target RNA.

The protein localises to the cytoplasm. CRISPR (clustered regularly interspaced short palindromic repeat) is an adaptive immune system that provides protection against mobile genetic elements (viruses, transposable elements and conjugative plasmids). CRISPR clusters contain spacers, sequences complementary to antecedent mobile elements, and target invading nucleic acids. CRISPR clusters are transcribed and processed into CRISPR RNA (crRNA). The CMR complex degrades RNA complementary to the crRNA (target RNA) within UA dinucleotides, generating 3'-OH and 5'-phosphate ends. Activity is dependent on the 8 nt long 5' tag in the crRNA, an unpaired 3' flag on the target RNA, and is stimulated by ATP. Some cleavage of the guide crRNA can also be observed. The sequence is that of CRISPR system CMR subunit Cmr7 1 (cmr7A) from Saccharolobus solfataricus (strain ATCC 35092 / DSM 1617 / JCM 11322 / P2) (Sulfolobus solfataricus).